Consider the following 572-residue polypeptide: Proline--tRNA ligase (572 aa).

The protein belongs to the class-II aminoacyl-tRNA synthetase family. ProS type 1 subfamily. In terms of assembly, homodimer.

Its subcellular location is the cytoplasm. It catalyses the reaction tRNA(Pro) + L-proline + ATP = L-prolyl-tRNA(Pro) + AMP + diphosphate. Catalyzes the attachment of proline to tRNA(Pro) in a two-step reaction: proline is first activated by ATP to form Pro-AMP and then transferred to the acceptor end of tRNA(Pro). As ProRS can inadvertently accommodate and process non-cognate amino acids such as alanine and cysteine, to avoid such errors it has two additional distinct editing activities against alanine. One activity is designated as 'pretransfer' editing and involves the tRNA(Pro)-independent hydrolysis of activated Ala-AMP. The other activity is designated 'posttransfer' editing and involves deacylation of mischarged Ala-tRNA(Pro). The misacylated Cys-tRNA(Pro) is not edited by ProRS. The chain is Proline--tRNA ligase from Psychrobacter cryohalolentis (strain ATCC BAA-1226 / DSM 17306 / VKM B-2378 / K5).